We begin with the raw amino-acid sequence, 226 residues long: MNPIVMKKLQKFIGYTFTNITLLKHALTHRSASSQHNERLEFLGDSILSFIIAKALYHHFPKMNEGGMSRMRATLVRGNTLAEIATEFSLGKYLQLGQGEKKSGGFKRESILANAIEAIIASIFLDSNIYTVERIILYWYKNRFKKMNPTGTKKDPKTRLQEYLQSKHFSLPIYSIGQIYGEAHNQIFTIYCKIDGLSELLIGIGASRRKAEQDAAQNALIRLEVE.

The 123-residue stretch at 6–128 (MKKLQKFIGY…IIASIFLDSN (123 aa)) folds into the RNase III domain. Glutamate 41 contributes to the Mg(2+) binding site. Residue aspartate 45 is part of the active site. Asparagine 114 and glutamate 117 together coordinate Mg(2+). The active site involves glutamate 117. The 71-residue stretch at 155 to 225 (DPKTRLQEYL…AQNALIRLEV (71 aa)) folds into the DRBM domain.

Belongs to the ribonuclease III family. Homodimer. Requires Mg(2+) as cofactor.

Its subcellular location is the cytoplasm. The enzyme catalyses Endonucleolytic cleavage to 5'-phosphomonoester.. Its function is as follows. Digests double-stranded RNA. Involved in the processing of primary rRNA transcript to yield the immediate precursors to the large and small rRNAs (23S and 16S). Processes some mRNAs, and tRNAs when they are encoded in the rRNA operon. Processes pre-crRNA and tracrRNA of type II CRISPR loci if present in the organism. This is Ribonuclease 3 from Buchnera aphidicola subsp. Cinara cedri (strain Cc).